A 124-amino-acid polypeptide reads, in one-letter code: Ribonuclease pancreatic (124 aa).

The segment covering 1–13 (KETSAQKFERQHM) has biased composition (basic and acidic residues). The interval 1 to 25 (KETSAQKFERQHMDSTGSSSSSPTY) is disordered. Lys7 and Arg10 together coordinate substrate. His12 acts as the Proton acceptor in catalysis. Cystine bridges form between Cys26-Cys84, Cys40-Cys95, Cys58-Cys110, and Cys65-Cys72. Substrate is bound by residues 41–45 (KPVNT), Lys66, and Arg85. The active-site Proton donor is the His119.

Belongs to the pancreatic ribonuclease family. Monomer. Interacts with and forms tight 1:1 complexes with RNH1. Dimerization of two such complexes may occur. Interaction with RNH1 inhibits this protein. As to expression, pancreas.

Its subcellular location is the secreted. It carries out the reaction an [RNA] containing cytidine + H2O = an [RNA]-3'-cytidine-3'-phosphate + a 5'-hydroxy-ribonucleotide-3'-[RNA].. The enzyme catalyses an [RNA] containing uridine + H2O = an [RNA]-3'-uridine-3'-phosphate + a 5'-hydroxy-ribonucleotide-3'-[RNA].. Endonuclease that catalyzes the cleavage of RNA on the 3' side of pyrimidine nucleotides. Acts on single-stranded and double-stranded RNA. The protein is Ribonuclease pancreatic (RNASE1) of Ondatra zibethicus (Muskrat).